A 425-amino-acid polypeptide reads, in one-letter code: Metacaspase-1 (425 aa).

The tract at residues 1-110 (MSYNSNPYNG…PQLPNTQTQS (110 aa)) is disordered. Residues 13–28 (YPPYNTYTRPNYSPNN) are compositionally biased toward low complexity. 2 stretches are compositionally biased toward polar residues: residues 29-38 (GSQSNNTVHQ) and 88-110 (TGAN…QTQS). Active-site residues include histidine 214 and cysteine 270.

It belongs to the peptidase C14B family.

Its subcellular location is the cytoplasm. The protein localises to the nucleus. Its function is as follows. Involved in cell death (apoptosis). The protein is Metacaspase-1 (pca1) of Schizosaccharomyces pombe (strain 972 / ATCC 24843) (Fission yeast).